A 151-amino-acid chain; its full sequence is Superoxide dismutase [Cu-Zn] 2 (151 aa).

3 residues coordinate Cu cation: H44, H46, and H61. A disulfide bond links C55 and C144. Zn(2+)-binding residues include H61, H69, H78, and D81. H118 serves as a coordination point for Cu cation.

The protein belongs to the Cu-Zn superoxide dismutase family. As to quaternary structure, homodimer. Cu cation serves as cofactor. The cofactor is Zn(2+).

It localises to the cytoplasm. The enzyme catalyses 2 superoxide + 2 H(+) = H2O2 + O2. Its function is as follows. Destroys radicals which are normally produced within the cells and which are toxic to biological systems. The polypeptide is Superoxide dismutase [Cu-Zn] 2 (SODCC.1) (Zea mays (Maize)).